A 963-amino-acid chain; its full sequence is Longitudinals lacking protein, isoforms J/P/Q/S/Z (963 aa).

Positions 32–97 constitute a BTB domain; it reads VDCTLAAEGK…MYRGEVNISQ (66 aa). Disordered regions lie at residues 115–200, 228–340, 447–469, and 482–520; these read LSDN…SSVL, SSGP…ASAS, DAQQ…RIRV, and GKSS…VSTT. Low complexity-rich tracts occupy residues 162–175, 228–251, 263–293, and 329–340; these read SGDV…SSSP, SSGP…LTST, TSST…QTTS, and NSATGPNPASAS. Residues 491–512 are compositionally biased toward polar residues; sequence KLTQSKKSLISDAKTTNKTSTP. The C2H2-type 1; degenerate zinc-finger motif lies at 849–871; it reads WVCRNCNRTYKWKNSLKCHLKNE. Residues 878–901 form a C2H2-type 2; degenerate zinc finger; the sequence is YFCSKMCGYATNVHSNLKRHLNTK. The disordered stretch occupies residues 900–963; sequence TKCRDREKDA…YTLVFQNDSA (64 aa). Residues 901 to 915 show a composition bias toward basic and acidic residues; it reads KCRDREKDADDEKKP. Over residues 937–953 the composition is skewed to low complexity; the sequence is SSSNNNNNGGGSSTSST. The span at 954-963 shows a compositional bias: polar residues; the sequence is YTLVFQNDSA.

In terms of tissue distribution, by stage 11, isoform Q, isoform P and isoform Z are expressed throughout the mesoderm. From stage 15, expression of isoform P expands to all tissues, whereas expression of isoform Z and isoform Q becomes restricted during later stages; starting from stage 14 to 16, isoform Z is expressed in muscle, and isoform Q and isoform Z are expressed in the CNS. For some isoforms, expression is also seen in specific types of cells in the embryo; isoform Z is expressed in the ventral furrow at stage 5, and isoform Q is expressed around the tracheal pits at stage 11. Isoform Z also shows transient enrichment in a dorsal cell layer in the CNS at stages 13 and 14.

Its subcellular location is the nucleus. Functionally, putative transcription factor required for axon growth and guidance in the central and peripheral nervous systems. Repels CNS axons away from the midline by promoting the expression of the midline repellent sli and its receptor robo. The protein is Longitudinals lacking protein, isoforms J/P/Q/S/Z of Drosophila melanogaster (Fruit fly).